The sequence spans 501 residues: TNF receptor-associated factor 2 (501 aa).

A2 carries the post-translational modification N-acetylalanine. The residue at position 5 (S5) is a Phosphoserine. Position 7 is a phosphothreonine (T7). Residue S11 is modified to Phosphoserine. Residue T22 is modified to Phosphothreonine. A Glycyl lysine isopeptide (Lys-Gly) (interchain with G-Cter in ubiquitin) cross-link involves residue K31. An RING-type zinc finger spans residues 34-73 (CSACRNVLRRPFQAQCGHRYCSFCLASILSSGPQNCAACV). T117 carries the phosphothreonine; by PKC modification. TRAF-type zinc fingers lie at residues 124 to 180 (CHEG…AHHE) and 177 to 233 (AHHE…EKQQ). Residues 283–293 (ENIVCVLNREV) form an important for interaction with BIRC2 and BIRC3 region. A coiled-coil region spans residues 299–348 (TAEACSRQHRLDQDKIEALSSKVQQLERSIGLKDLAMADLEQKVLEMEAS). K320 participates in a covalent cross-link: Glycyl lysine isopeptide (Lys-Gly) (interchain with G-Cter in ubiquitin). The MATH domain maps to 351 to 496 (DGVFIWKISD…DDAIFIKAIV (146 aa)).

Belongs to the TNF receptor-associated factor family. A subfamily. Homotrimer. Heterotrimer with TRAF1. Heterotrimer with TRAF3 (via TRAF domain). The domain containing the RING-type and the first TRAF-type zinc finger can also form homodimers (in vitro). Interacts with TNFRSF1B/TNFR2. Interacts with TNFRSF5/CD40. Interacts with TNFRSF4, TNFRSF7/CD27, TNFRSF8/CD30, TNFRSF9/CD137, TNFRSF11A/RANK, TNFRSF13B/TACI, TNFRSF14, TNFRSF16/NGFR, TNFRSF17/BCMA, TNFRSF18/AITR, TNFRSF19/TROY, TNFRSF19L/RELT and EDAR. Stimulation of TNF-alpha receptor TNFRSF1A leads to the formation of two distinct signaling complexes. Plasma membrane-bound complex I is composed of TNFRSF1A, TRADD, RIPK1, TRAF2 and BIRC2/c-IAP1 or BIRC3 which interacts with CHUCK/IKK-alpha, IKBKB/IKK-beta and IKBKG/IKK-gamma promoting cell survival. Subsequently, TRADD, RIPK1 and TRAF2 dissociate from TNFRSF1A and form cytoplasmic complex II with FADD and caspase CASP8 promoting cell apoptosis. Interacts with TRADD. Identified in a complex with TNFRSF1A, RIPK1 and IKBKB/IKK-beta. Interacts with RIPK2. Interacts with BIRC2 and BIRC3 N-terminus; a single BIRC2 or BIRC3 molecule interacts with a heterotrimer formed by TRAF1 and TRAF2, or a TRAF2 homotrimer. Identified in a complex composed of TRAF2, TRAF3, BIRC2 and BIRC3. Interacts with BIRC2; the interaction promotes BIRC2 stability. Interaction with BIRC2 and/or BIRC3 is essential for ubiquitination of IKBKE, degradation of NFKBIA and activation of NF-kappa-B. Within complex I, phosphorylated TRAF2 interacts (via 'Lys-63'-linked polyubiquitin chains) with CHUCK/IKK-alpha, IKBKB/IKK-beta, IKBKG/IKK-gamma TAB2, TAB3 and TAK1 in response to TNF-alpha stimulation. Within complex I, interacts with UXT isoform 1 (via TPQE motif); the interaction prevents the recruitment of FADD and CASP8/caspase 8 to complex I. Forms a complex composed of TNFRSF8/CD30 or TNFRSF1B/TNFR2, and TRAF1, TRAF2 and E3 ligase TRAIP. Within the complex, interacts with TRAIP; the interaction inhibits TRAF2-mediated NF-kappa B activation. Component of a complex composed of TANK and TBK1. Interacts with TRPC4AP. Interacts with MAP3K1/MEKK1, MAP3K5/ASK1 and MAP3K11/MLK3 in response to TNF-alpha stimulation; the interaction leads to JNK activation and interaction with MAP3K5 is inhibited by PRMT1. Component of a complex composed of MAP3K14/NIK BIRC3 and TRAF3; the interaction leads to BIRC2/3-mediated ubiquitination of TRAF3 upon CD40 engagement in a TRAF2-dependent manner. Interacts with MAP3K14/NIK in response to TNF-alpha stimulation; the interaction leads to NF-kappa B activation. Interacts with PEG3; the interaction may promote TRAF2-mediated NF-kappa B activation. Interacts with HIVEP3; the interaction may inhibit TNF-alpha-TRAF2-mediated NF-kappa B and JNK activation. Interacts with TANK/ITRAF; the interaction prevents interaction between TNFRSF1B/TNFR2 and TRAF2. Interacts with deubiquitinating enzyme CYLD; the interaction results in the deubiquitination and inactivation of TRAF2. Interacts with SIAH2; the interaction leads to TRAF2 ubiquitination and degradation. Interacts with E2 conjugating enzyme UBE2N/Ubc13, E3 ligase ITCH and RNF11 in response to TNF-alpha stimulation. Interacts with ubiquitin-editing enzyme TNFAIP3/A20 in response to TNF-alpha stimulation; the interaction promotes TRAF2 dissociation from UBE2N/Ubc13, ITCH, RNF11 and TAX1BP1 and prevents prolonged TRAF-2 ubiquitination. Interacts with TAX1BP1 in response to TNF-alpha stimulation; the interaction promotes TRAF2 dissociation from UBE2N/Ubc13 and TNFAIP3/A20, and prevents prolonged TRAF-2 ubiquitination. Interacts (via C-terminus) with EIF2AK2/PKR (via the kinase catalytic domain). Interacts with deubiquitinating enzyme USP48. Interacts with PTPN2; probably involved in TNF-mediated signaling. Interacts with Toll-like receptor TLR4/3 adapter TICAM1/TRIF; the interaction may promote TICAM1 ubiquitination. Interacts with kinase/endoribonuclease ERN1/IRE1 and DAB2IP in response to ER stress; the interaction requires DAB2IP. Interacts with ERN1/IRE1 and TAOK3 in response to ER stress; the interaction may promote TRAF2 phosphorylation. Interacts (via zinc fingers) with DAB2IP (via C-terminus PER domain)in response to TNF-alpha stimulation. Interacts with CASP8AP2/FLASH. Interacts with NFATC2IP; the interaction may repress IL-4 production in T cells. Interacts with kinase CDK9. Interacts with sphingosine kinase 1 SPHK1. Interacts with kinase TNIK. Interacts with TRAFD1. Interacts with DNA phosphodiesterase TDP2. Interacts with MAVS/IPS1. Interacts with CARD14. Interacts with Epstein-Barr virus LMP1/BNFL1. Interacts with GPS2. Interacts with XPNPEP3. Interacts with RIPK3. Interacts with RELL2. Interacts with LRRC19. Interacts with GAPDH; promoting TRAF2 ubiquitination. In terms of processing, phosphorylated at several serine residues within the first 128 amino acid residues. Phosphorylated at Thr-117 in response to signaling via TNF and TNFRSF1A. Phosphorylation at Thr-117 is required for 'Lys-63'-linked polyubiquitination, but not for 'Lys-48'-linked polyubiquitination. Phosphorylation at Thr-117 is important for interaction with IKKA and IKKB, activation of IKK and subsequent activation of NF-kappa-B. Undergoes both 'Lys-48'-linked and 'Lys-63'-linked polyubiquitination. Polyubiquitinated via 'Lys-63'-linked ubiquitin in response to TNF signaling; this requires prior phosphorylation at Thr-117. 'Lys-63'-linked polyubiquitination promotes TRAF2-mediated activation of NF-kappa-B. Can be polyubiquitinated at several Lys residues via 'Lys-48'-linked ubiquitin chains in response to TNF signaling, leading to proteasomal degradation. Autoubiquitinated, leading to its subsequent proteasomal degradation. Polyubiquitinated by BIRC2 and SIAH2, leading to its subsequent proteasomal degradation. Deubiquitinated by CYLD, a protease that specifically cleaves 'Lys-63'-linked polyubiquitin chains. Ubiquination is inhibited by LRRC19; inhibits proteasomal degradation. Ubiquitinated at Lys-320 by the SCF(FBXL2) complex, leading to its degradation by the proteasome. Ubiquitinated by E3 ubiquitin-protein ligase complex containing FBXO7; leading to repression of NF-kappa-B signaling.

Its subcellular location is the cytoplasm. It carries out the reaction S-ubiquitinyl-[E2 ubiquitin-conjugating enzyme]-L-cysteine + [acceptor protein]-L-lysine = [E2 ubiquitin-conjugating enzyme]-L-cysteine + N(6)-ubiquitinyl-[acceptor protein]-L-lysine.. Its pathway is protein modification; protein ubiquitination. With respect to regulation, has very low E3 ubiquitin ligase activity in the absence of sphingosine-1-phosphate. E3 ubiquitin ligase activity is strongly activated by cytoplasmic sphingosine-1-phosphate. E3 ubiquitin-protein ligase that regulates activation of NF-kappa-B and JNK and plays a central role in the regulation of cell survival and apoptosis. Catalyzes 'Lys-63'-linked ubiquitination of target proteins, such as BIRC3, IKBKE, MLST8, RIPK1 and TICAM1. Is an essential constituent of several E3 ubiquitin-protein ligase complexes, where it promotes the ubiquitination of target proteins by bringing them into contact with other E3 ubiquitin ligases. Regulates BIRC2 and BIRC3 protein levels by inhibiting their autoubiquitination and subsequent degradation; this does not depend on the TRAF2 RING-type zinc finger domain. Plays a role in mediating activation of NF-kappa-B by EIF2AK2/PKR. In complex with BIRC2 or BIRC3, promotes ubiquitination of IKBKE. Acts as a regulator of mTORC1 and mTORC2 assembly by mediating 'Lys-63'-linked ubiquitination of MLST8, thereby inhibiting formation of the mTORC2 complex, while facilitating assembly of the mTORC1 complex. Required for normal antibody isotype switching from IgM to IgG. The sequence is that of TNF receptor-associated factor 2 from Homo sapiens (Human).